The primary structure comprises 314 residues: Solute carrier family 25 member 33 (314 aa).

3 Solcar repeats span residues 4-111, 119-206, and 224-308; these read KDTL…SKET, NSGV…LKKY, and SDFL…IVHL. 6 helical membrane passes run 7-27, 44-58, 114-134, 183-203, 226-246, and 291-311; these read LLHL…TCPL, VFQV…AGVI, GIFV…AAFI, LTAS…YETL, FLGL…IAYP, and QIPN…LLAE.

It belongs to the mitochondrial carrier (TC 2.A.29) family.

The protein localises to the mitochondrion inner membrane. In terms of biological role, mitochondrial transporter that imports/exports pyrimidine nucleotides into and from mitochondria which participates in dendritic cell endocytosis. In Danio rerio (Zebrafish), this protein is Solute carrier family 25 member 33 (slc25a33).